The chain runs to 232 residues: Ribonuclease 3 (232 aa).

The RNase III domain occupies 6 to 135 (QDYLAKTYGI…FIGALYLDQG (130 aa)). E48 is a Mg(2+) binding site. D52 is a catalytic residue. The Mg(2+) site is built by D121 and E124. Residue E124 is part of the active site. The DRBM domain maps to 161-230 (DAKTSLQEFL…AKHALEKLRM (70 aa)).

It belongs to the ribonuclease III family. As to quaternary structure, homodimer. The cofactor is Mg(2+).

The protein localises to the cytoplasm. It catalyses the reaction Endonucleolytic cleavage to 5'-phosphomonoester.. Digests double-stranded RNA. Involved in the processing of primary rRNA transcript to yield the immediate precursors to the large and small rRNAs (23S and 16S). Processes some mRNAs, and tRNAs when they are encoded in the rRNA operon. Processes pre-crRNA and tracrRNA of type II CRISPR loci if present in the organism. This chain is Ribonuclease 3, found in Limosilactobacillus fermentum (strain NBRC 3956 / LMG 18251) (Lactobacillus fermentum).